A 502-amino-acid chain; its full sequence is Xyloglucan-specific endo-beta-1,4-glucanase BoGH5A (502 aa).

An N-terminal signal peptide occupies residues 1–32 (MEKQSFSDGLFSPLGIKRVIFMLVLLTTSFIS). Residue Cys-33 is the site of N-palmitoyl cysteine attachment. Residue Cys-33 is the site of S-diacylglycerol cysteine attachment. The BACON domain maps to 67–127 (GPAEWHISTS…PDIIINVKQS (61 aa)). Residues Asn-165, Val-172, His-251, and Asn-296 each coordinate substrate. The active-site Proton donor is the Glu-297. Glu-430 functions as the Nucleophile in the catalytic mechanism. Trp-472 is a binding site for substrate.

This sequence belongs to the glycosyl hydrolase 5 (cellulase A) family.

Its subcellular location is the cell outer membrane. The catalysed reaction is xyloglucan + H2O = xyloglucan oligosaccharides.. It participates in glucan metabolism; xyloglucan degradation. In terms of biological role, catalyzes endohydrolysis of 1,4-beta-D-glucosidic linkages in xyloglucan with retention of the beta-configuration of the glycosyl residues in xyloglucan degradation. Cleaves the backbone of the 3 major types of natural xyloglucans (seed galactoxyloglucan from tamarind kernel, dicot fucogalactoxyloglucan from lettuce leaves, and solanaceous arabinogalactoxyloglucan from tomato fruit), to produce xyloglucan oligosaccharides. In Bacteroides ovatus (strain ATCC 8483 / DSM 1896 / JCM 5824 / BCRC 10623 / CCUG 4943 / NCTC 11153), this protein is Xyloglucan-specific endo-beta-1,4-glucanase BoGH5A.